The primary structure comprises 226 residues: Clarin-3 (226 aa).

The chain crosses the membrane as a helical span at residues 8-28 (LMFLSGFLTSLGSVVVICSIL). Asn46 is a glycosylation site (N-linked (GlcNAc...) asparagine). The next 3 membrane-spanning stretches (helical) occupy residues 92-112 (VVIL…VFTF), 128-148 (GVYT…VLFV), and 181-201 (FWLT…IIFY).

This sequence belongs to the clarin family.

It localises to the membrane. This chain is Clarin-3 (Clrn3), found in Mus musculus (Mouse).